Consider the following 284-residue polypeptide: Co-chaperone protein DjlA (284 aa).

Residues 1–6 (MHIFGK) lie on the Periplasmic side of the membrane. The helical transmembrane segment at 7-30 (ILGAFFGLLLGGPFGLLFGLFIGH) threads the bilayer. The Cytoplasmic portion of the chain corresponds to 31-284 (QFDKARRLSQ…DLIKKVKGFK (254 aa)). In terms of domain architecture, J spans 218-284 (DAYKILDVSP…DLIKKVKGFK (67 aa)).

As to quaternary structure, homodimer.

The protein localises to the cell inner membrane. Regulatory DnaK co-chaperone. Direct interaction between DnaK and DjlA is needed for the induction of the wcaABCDE operon, involved in the synthesis of a colanic acid polysaccharide capsule, possibly through activation of the RcsB/RcsC phosphotransfer signaling pathway. The colanic acid capsule may help the bacterium survive conditions outside the host. The protein is Co-chaperone protein DjlA of Vibrio parahaemolyticus serotype O3:K6 (strain RIMD 2210633).